The sequence spans 259 residues: Putative protein-tyrosine sulfotransferase (259 aa).

Cysteines 13 and 68 form a disulfide. The Proton donor/acceptor role is filled by Glu-16. N-linked (GlcNAc...) asparagine glycosylation occurs at Asn-36. Residues Arg-95, Ser-103, and Arg-107 each coordinate 3'-phosphoadenylyl sulfate. An N-linked (GlcNAc...) asparagine glycan is attached at Asn-115. Residues Cys-137 and Cys-144 are joined by a disulfide bond. 3'-phosphoadenylyl sulfate contacts are provided by residues Tyr-149 and 194–203 (SASQVKNSIN).

It belongs to the protein sulfotransferase family.

The catalysed reaction is L-tyrosyl-[protein] + 3'-phosphoadenylyl sulfate = O-sulfo-L-tyrosine-[protein] + adenosine 3',5'-bisphosphate + H(+). Functionally, catalyzes the O-sulfation of tyrosine residues within acidic motifs of polypeptides, using 3'-phosphoadenylyl sulfate (PAPS) as cosubstrate. This Caenorhabditis elegans protein is Putative protein-tyrosine sulfotransferase (tpst-2).